The primary structure comprises 243 residues: Terpene cyclase dpmpB (243 aa).

7 consecutive transmembrane segments (helical) span residues 13–33 (FLEVAWLADACKLLMGVGWTA), 51–71 (ALMPLCCNFAWELVYALILPF), 78–98 (WVHVTGLAFNCGVMYTAIKFA), 112–132 (LTWIFIASVAGWMSAHLALAA), 141–161 (AWSAYGCQLLLSVGGLCQLLC), 169–189 (SYLLWFSRFFGSLVLIPQDIL), and 207–227 (LWFVSIFLILDGSYGILLWYV).

This sequence belongs to the paxB family.

It is found in the membrane. It participates in secondary metabolite biosynthesis; terpenoid biosynthesis. In terms of biological role, terpene cyclase; part of the gene cluster that mediates the biosynthesis of diterpenoid pyrones. The first step of the pathway is the synthesis of the alpha-pyrone moiety by the polyketide synthase dpmpA via condensation of one acetyl-CoA starter unit with 3 malonyl-CoA units and 2 methylations. The alpha-pyrone is then combined with geranylgeranyl pyrophosphate (GGPP) formed by the GGPP synthase dpmpD through the action of the prenyltransferase dpmpC to yield a linear alpha-pyrone diterpenoid. Subsequent steps in the diterpenoid pyrone biosynthetic pathway involve the decalin core formation, which is initiated by the epoxidation of the C10-C11 olefin by the FAD-dependent oxidoreductase dpmpE, and is followed by a cyclization cascade catalyzed by the terpene cyclase dpmpB. The short chain dehydrogenase/reductase dpmpG then oxidizes the 8S hydroxy group to a ketone and the short chain dehydrogenase/reductase dpmpH reduces the ketone to the 8R hydroxy group to yield higginsianin B. Higginsianin B is further methylated by the methyltransferase dpmpI to produce the intermediate named FDDP B. The cytochrome P450 monooxygenase dpmpJ then oxidizes the C-26 methyl to primary alcohol, producing the final diterpenoid pyrone with a C-26 primary alcohol on the gamma-pyrone moiety named FDDP C. In Macrophomina phaseolina (strain MS6) (Charcoal rot fungus), this protein is Terpene cyclase dpmpB.